The chain runs to 109 residues: Phosphoribosyl-ATP pyrophosphatase (109 aa).

The protein belongs to the PRA-PH family.

It is found in the cytoplasm. It catalyses the reaction 1-(5-phospho-beta-D-ribosyl)-ATP + H2O = 1-(5-phospho-beta-D-ribosyl)-5'-AMP + diphosphate + H(+). The protein operates within amino-acid biosynthesis; L-histidine biosynthesis; L-histidine from 5-phospho-alpha-D-ribose 1-diphosphate: step 2/9. The protein is Phosphoribosyl-ATP pyrophosphatase of Marinobacter nauticus (strain ATCC 700491 / DSM 11845 / VT8) (Marinobacter aquaeolei).